The primary structure comprises 509 residues: Taxoid 14-beta-hydroxylase (509 aa).

The next 3 helical transmembrane spans lie at 20–40, 186–206, and 218–238; these read AILFIVLSAVAGIVLPLLLFL, SVVALVGDLVFDISACLFFNI, and LLEIIAVGVLAVPVDLPGFAY. Cys-443 serves as a coordination point for heme.

This sequence belongs to the cytochrome P450 family.

Its subcellular location is the microsome membrane. The enzyme catalyses 10beta-hydroxytaxa-4(20),11-dien-5alpha-yl acetate + NADPH + O2 + H(+) = 10beta,14beta-dihydroxytaxa-4(20),11-dien-5alpha-yl acetate + NADP(+) + H2O. The protein operates within alkaloid biosynthesis; taxol biosynthesis. Functionally, catalyzes the conversion of 5-alpha-acetoxy-10beta-ol to 5-alpha-acetoxy-10beta,14beta-dihydroxy taxadiene. Also acts on taxa-4(20),11-dien-5-alpha-yl acetate. The polypeptide is Taxoid 14-beta-hydroxylase (Taxus cuspidata (Japanese yew)).